The sequence spans 69 residues: Antimicrobial peptide Eval36 (69 aa).

The first 23 residues, 1-23, serve as a signal peptide directing secretion; it reads MKAQFAILVISMMLLQLIVQTES. Leu-37 carries the leucine amide modification. The propeptide occupies 38-69; it reads GKRGLRNLDDFQDFLDSDTSDADLRMLRDMFR.

This sequence belongs to the non-disulfide-bridged peptide (NDBP) superfamily. Short antimicrobial peptide (group 4) family. As to expression, expressed by the venom gland.

It is found in the secreted. Functionally, probable antimicrobial peptide. Shows low inhibitory activity against herpes simplex virus type 1 (HSV-1). This Euscorpiops validus (Scorpion) protein is Antimicrobial peptide Eval36.